The sequence spans 379 residues: Succinyl-diaminopimelate desuccinylase (379 aa).

His70 is a Zn(2+) binding site. The active site involves Asp72. Zn(2+) is bound at residue Asp103. The active-site Proton acceptor is the Glu137. Positions 138, 166, and 352 each coordinate Zn(2+).

Belongs to the peptidase M20A family. DapE subfamily. As to quaternary structure, homodimer. The cofactor is Zn(2+). Co(2+) serves as cofactor.

The catalysed reaction is N-succinyl-(2S,6S)-2,6-diaminopimelate + H2O = (2S,6S)-2,6-diaminopimelate + succinate. It participates in amino-acid biosynthesis; L-lysine biosynthesis via DAP pathway; LL-2,6-diaminopimelate from (S)-tetrahydrodipicolinate (succinylase route): step 3/3. In terms of biological role, catalyzes the hydrolysis of N-succinyl-L,L-diaminopimelic acid (SDAP), forming succinate and LL-2,6-diaminopimelate (DAP), an intermediate involved in the bacterial biosynthesis of lysine and meso-diaminopimelic acid, an essential component of bacterial cell walls. In Shewanella baltica (strain OS155 / ATCC BAA-1091), this protein is Succinyl-diaminopimelate desuccinylase.